Reading from the N-terminus, the 206-residue chain is Large ribosomal subunit protein uL4 (206 aa).

The segment at 48–97 is disordered; sequence THAVKNRSLVSGGGKKPWKQKHTGRARQGSTRASQWVGGGKAMGPKPRDY. The span at 63-72 shows a compositional bias: basic residues; sequence KPWKQKHTGR.

It belongs to the universal ribosomal protein uL4 family. Part of the 50S ribosomal subunit.

Its function is as follows. One of the primary rRNA binding proteins, this protein initially binds near the 5'-end of the 23S rRNA. It is important during the early stages of 50S assembly. It makes multiple contacts with different domains of the 23S rRNA in the assembled 50S subunit and ribosome. Functionally, forms part of the polypeptide exit tunnel. This is Large ribosomal subunit protein uL4 from Anaeromyxobacter sp. (strain K).